Consider the following 780-residue polypeptide: Tripartite terminase subunit 1 (780 aa).

Disordered stretches follow at residues 41-66 (RGNA…AGPG), 428-447 (GAGA…GDRV), and 452-483 (GARG…WGDI). The segment covering 52 to 63 (ASGAGAAASSEA) has biased composition (low complexity). Residues 429–439 (AGAGGPKGGAG) show a composition bias toward gly residues. Position 691-698 (691-698 (FASVYRCG)) interacts with ATP.

This sequence belongs to the herpesviridae TRM1 protein family. As to quaternary structure, associates with TRM2 and TRM3 to form the tripartite terminase complex. Interacts with portal protein.

Its subcellular location is the host nucleus. Functionally, component of the molecular motor that translocates viral genomic DNA in empty capsid during DNA packaging. Forms a tripartite terminase complex together with TRM2 and TRM3 in the host cytoplasm. Once the complex reaches the host nucleus, it interacts with the capsid portal vertex. This portal forms a ring in which genomic DNA is translocated into the capsid. TRM1 carries an endonuclease activity that plays an important role for the cleavage of concatemeric viral DNA into unit length genomes. The sequence is that of Tripartite terminase subunit 1 from Homo sapiens (Human).